The sequence spans 707 residues: Phosphoprotein (707 aa).

Positions 1-35 are N0 binding; it reads MDKLDLVNDGLDIIDFIQKNQKEIQKTYGRSSIQQ. Disordered stretches follow at residues 26 to 103, 193 to 229, 254 to 446, and 454 to 473; these read KTYG…EDPD, FVPK…PRGN, FAKS…AENV, and VTRN…SLDD. Polar residues-rich tracts occupy residues 28-37 and 77-96; these read YGRSSIQQPS and DLSS…SNTR. Position 257 is a phosphoserine; by host (S257). A compositionally biased stretch (basic and acidic residues) spans 296 to 317; the sequence is FPEKEETPDVRRKDSLMQDSCK. Phosphoserine; by host is present on S350. The span at 435 to 446 shows a compositional bias: polar residues; it reads NQESKSVTAENV. The segment at 473–578 is multimerization; that stretch reads DKYIMPSDDF…LVSMMIMIPG (106 aa).

Homotetramer. Interacts (via multimerization domain) with polymerase L; this interaction forms the polymerase L-P complex. Interacts (via N-terminus) with N0 (via Ncore); this interaction allows P to chaperon N0 to avoid N polymerization before encapsidation. Interacts (via C-terminus) with N-RNA template; this interaction positions the polymerase on the template for both transcription and replication.

Essential cofactor of the RNA polymerase L that plays a central role in the transcription and replication by forming the polymerase complex with RNA polymerase L and recruiting L to the genomic N-RNA template for RNA synthesis. Also plays a central role in the encapsidation of nascent RNA chains by forming the encapsidation complex with the nucleocapsid protein N (N-P complex). Acts as a chaperone for newly synthesized free N protein, so-called N0, allowing encapsidation of nascent RNA chains during replication. The nucleoprotein protein N prevents excessive phosphorylation of P, which leads to down-regulation of viral transcription/ replication. Participates, together with N, in the formation of viral factories (viroplasms), which are large inclusions in the host cytoplasm where replication takes place. In Equus caballus (Horse), this protein is Phosphoprotein (P/V/C).